The following is a 215-amino-acid chain: Thymidylate kinase (215 aa).

Residue 12–19 (GLEGAGKT) coordinates ATP.

Belongs to the thymidylate kinase family.

The catalysed reaction is dTMP + ATP = dTDP + ADP. Its function is as follows. Phosphorylation of dTMP to form dTDP in both de novo and salvage pathways of dTTP synthesis. This chain is Thymidylate kinase, found in Halorhodospira halophila (strain DSM 244 / SL1) (Ectothiorhodospira halophila (strain DSM 244 / SL1)).